Here is a 74-residue protein sequence, read N- to C-terminus: ILQISGERNVEKEDKNDTWHRVERSSGKFMRSFRLPDNAKVDQVKASMENGVLTVTVPKEEIKKPDVKAIEISG.

Residues 1-20 are disordered; that stretch reads ILQISGERNVEKEDKNDTWH. One can recognise a sHSP domain in the interval 1 to 74; that stretch reads ILQISGERNV…PDVKAIEISG (74 aa). A compositionally biased stretch (basic and acidic residues) spans 8 to 20; it reads RNVEKEDKNDTWH.

This sequence belongs to the small heat shock protein (HSP20) family. Forms oligomeric structures.

It is found in the cytoplasm. This chain is Class I heat shock protein (HSP6834-A), found in Glycine max (Soybean).